Reading from the N-terminus, the 151-residue chain is Large ribosomal subunit protein bL17 (151 aa).

Residues 118–151 (EAKQPPRKEKAKKPAPVQAEEASATPASEEKAQD) are disordered. Positions 131-144 (PAPVQAEEASATPA) are enriched in low complexity.

It belongs to the bacterial ribosomal protein bL17 family. In terms of assembly, part of the 50S ribosomal subunit. Contacts protein L32.

The sequence is that of Large ribosomal subunit protein bL17 from Syntrophobacter fumaroxidans (strain DSM 10017 / MPOB).